We begin with the raw amino-acid sequence, 318 residues long: Ubiquitin-like domain-containing CTD phosphatase 1 (318 aa).

N-acetylalanine is present on Ala2. The region spanning 3–81 is the Ubiquitin-like domain; it reads LPIIVKWGGQ…IMMMGTREES (79 aa). An N6-acetyllysine modification is found at Lys117. Residues 133–294 form the FCP1 homology domain; it reads PREGKKLLVL…LKLTQYLKEI (162 aa). Mg(2+) contacts are provided by Asp143, Asp145, and Asp253.

Mg(2+) serves as cofactor.

The protein localises to the nucleus. It catalyses the reaction O-phospho-L-seryl-[protein] + H2O = L-seryl-[protein] + phosphate. The enzyme catalyses O-phospho-L-threonyl-[protein] + H2O = L-threonyl-[protein] + phosphate. Dephosphorylates 26S nuclear proteasomes, thereby decreasing their proteolytic activity. Recruited to the 19S regulatory particle of the 26S proteasome through its interaction with 19S component PSMD2/RPN1. Once recruited, dephosphorylates 19S component PSMC2/RPT1 which impairs PSMC2 ATPase activity and disrupts 26S proteasome assembly. Has also been reported to stimulate the proteolytic activity of the 26S proteasome. This is Ubiquitin-like domain-containing CTD phosphatase 1 (UBLCP1) from Bos taurus (Bovine).